The sequence spans 582 residues: ATP-dependent lipid A-core flippase (582 aa).

5 helical membrane-spanning segments follow: residues 16–36 (LWPT…ALIL), 64–84 (LMWM…TSYI), 153–173 (IIGL…ILIV), 253–273 (PIIQ…ASFP), and 275–295 (VMDS…IALM). Residues 28-310 (IVAGVALILN…LTNVNAQFQR (283 aa)) form the ABC transmembrane type-1 domain. The ABC transporter domain maps to 342 to 578 (VEFRNVTFTY…RGVYAQLHKM (237 aa)). 376 to 383 (GRSGSGKS) serves as a coordination point for ATP.

The protein belongs to the ABC transporter superfamily. Lipid exporter (TC 3.A.1.106) family. As to quaternary structure, homodimer.

The protein localises to the cell inner membrane. It carries out the reaction ATP + H2O + lipid A-core oligosaccharideSide 1 = ADP + phosphate + lipid A-core oligosaccharideSide 2.. Functionally, involved in lipopolysaccharide (LPS) biosynthesis. Translocates lipid A-core from the inner to the outer leaflet of the inner membrane. Transmembrane domains (TMD) form a pore in the inner membrane and the ATP-binding domain (NBD) is responsible for energy generation. This Escherichia coli O6:K15:H31 (strain 536 / UPEC) protein is ATP-dependent lipid A-core flippase.